We begin with the raw amino-acid sequence, 311 residues long: Aspartate carbamoyltransferase catalytic subunit (311 aa).

Carbamoyl phosphate contacts are provided by Arg55 and Thr56. Lys85 provides a ligand contact to L-aspartate. Residues Arg106, His135, and Gln138 each contribute to the carbamoyl phosphate site. Positions 168 and 230 each coordinate L-aspartate. Carbamoyl phosphate is bound by residues Leu268 and Pro269.

Belongs to the aspartate/ornithine carbamoyltransferase superfamily. ATCase family. In terms of assembly, heterododecamer (2C3:3R2) of six catalytic PyrB chains organized as two trimers (C3), and six regulatory PyrI chains organized as three dimers (R2).

The catalysed reaction is carbamoyl phosphate + L-aspartate = N-carbamoyl-L-aspartate + phosphate + H(+). It participates in pyrimidine metabolism; UMP biosynthesis via de novo pathway; (S)-dihydroorotate from bicarbonate: step 2/3. Its function is as follows. Catalyzes the condensation of carbamoyl phosphate and aspartate to form carbamoyl aspartate and inorganic phosphate, the committed step in the de novo pyrimidine nucleotide biosynthesis pathway. This is Aspartate carbamoyltransferase catalytic subunit from Pectobacterium carotovorum subsp. carotovorum (strain PC1).